The primary structure comprises 225 residues: ATP-dependent Clp protease proteolytic subunit (225 aa).

Ser123 serves as the catalytic Nucleophile. Residue His148 is part of the active site.

This sequence belongs to the peptidase S14 family. As to quaternary structure, fourteen ClpP subunits assemble into 2 heptameric rings which stack back to back to give a disk-like structure with a central cavity, resembling the structure of eukaryotic proteasomes.

Its subcellular location is the cytoplasm. It carries out the reaction Hydrolysis of proteins to small peptides in the presence of ATP and magnesium. alpha-casein is the usual test substrate. In the absence of ATP, only oligopeptides shorter than five residues are hydrolyzed (such as succinyl-Leu-Tyr-|-NHMec, and Leu-Tyr-Leu-|-Tyr-Trp, in which cleavage of the -Tyr-|-Leu- and -Tyr-|-Trp bonds also occurs).. In terms of biological role, cleaves peptides in various proteins in a process that requires ATP hydrolysis. Has a chymotrypsin-like activity. Plays a major role in the degradation of misfolded proteins. This chain is ATP-dependent Clp protease proteolytic subunit, found in Chlorobium chlorochromatii (strain CaD3).